Here is a 1598-residue protein sequence, read N- to C-terminus: Pentafunctional AROM polypeptide (1598 aa).

The tract at residues 1 to 384 (MGVPTKISIL…YEPRASTVSN (384 aa)) is 3-dehydroquinate synthase. Residues 44 to 46 (DTN), 81 to 84 (ESSK), 114 to 116 (GGV), and D119 contribute to the NAD(+) site. R130 serves as a coordination point for 7-phospho-2-dehydro-3-deoxy-D-arabino-heptonate. 139 to 140 (TT) is a binding site for NAD(+). Positions 146 and 152 each coordinate 7-phospho-2-dehydro-3-deoxy-D-arabino-heptonate. Residue K161 coordinates NAD(+). Residue N162 coordinates 7-phospho-2-dehydro-3-deoxy-D-arabino-heptonate. NAD(+) is bound by residues 179–182 (FLNT) and N190. E194 provides a ligand contact to Zn(2+). 7-phospho-2-dehydro-3-deoxy-D-arabino-heptonate is bound by residues 194–197 (EVIK) and K250. Catalysis depends on E260, which acts as the Proton acceptor; for 3-dehydroquinate synthase activity. Residues 264–268 (RNLLN) and H271 each bind 7-phospho-2-dehydro-3-deoxy-D-arabino-heptonate. H271 contacts Zn(2+). The active-site Proton acceptor; for 3-dehydroquinate synthase activity is the H275. Residues H287 and K356 each contribute to the 7-phospho-2-dehydro-3-deoxy-D-arabino-heptonate site. Residue H287 coordinates Zn(2+). The tract at residues 397-842 (VYPGFPKSLN…WNTLAQTFKV (446 aa)) is EPSP synthase. Residue C824 is the For EPSP synthase activity of the active site. The tract at residues 867 to 1059 (AASIFIIGMR…RRKENTFFVS (193 aa)) is shikimate kinase. 874 to 881 (GMRGAGKT) serves as a coordination point for ATP. The segment at 1060–1280 (LTFPDLTPAS…AAPGQLSARE (221 aa)) is 3-dehydroquinase. H1183 (proton acceptor; for 3-dehydroquinate dehydratase activity) is an active-site residue. The Schiff-base intermediate with substrate; for 3-dehydroquinate dehydratase activity role is filled by K1211. Residues 1293–1598 (AKKFAVIGKP…GVSSSDDTIS (306 aa)) form a shikimate dehydrogenase region.

It in the N-terminal section; belongs to the sugar phosphate cyclases superfamily. Dehydroquinate synthase family. The protein in the 2nd section; belongs to the EPSP synthase family. In the 3rd section; belongs to the shikimate kinase family. This sequence in the 4th section; belongs to the type-I 3-dehydroquinase family. It in the C-terminal section; belongs to the shikimate dehydrogenase family. As to quaternary structure, homodimer. Requires Zn(2+) as cofactor.

It is found in the cytoplasm. The enzyme catalyses 7-phospho-2-dehydro-3-deoxy-D-arabino-heptonate = 3-dehydroquinate + phosphate. It carries out the reaction 3-dehydroquinate = 3-dehydroshikimate + H2O. The catalysed reaction is shikimate + NADP(+) = 3-dehydroshikimate + NADPH + H(+). It catalyses the reaction shikimate + ATP = 3-phosphoshikimate + ADP + H(+). The enzyme catalyses 3-phosphoshikimate + phosphoenolpyruvate = 5-O-(1-carboxyvinyl)-3-phosphoshikimate + phosphate. It participates in metabolic intermediate biosynthesis; chorismate biosynthesis; chorismate from D-erythrose 4-phosphate and phosphoenolpyruvate: step 2/7. The protein operates within metabolic intermediate biosynthesis; chorismate biosynthesis; chorismate from D-erythrose 4-phosphate and phosphoenolpyruvate: step 3/7. Its pathway is metabolic intermediate biosynthesis; chorismate biosynthesis; chorismate from D-erythrose 4-phosphate and phosphoenolpyruvate: step 4/7. It functions in the pathway metabolic intermediate biosynthesis; chorismate biosynthesis; chorismate from D-erythrose 4-phosphate and phosphoenolpyruvate: step 5/7. It participates in metabolic intermediate biosynthesis; chorismate biosynthesis; chorismate from D-erythrose 4-phosphate and phosphoenolpyruvate: step 6/7. Its function is as follows. The AROM polypeptide catalyzes 5 consecutive enzymatic reactions in prechorismate polyaromatic amino acid biosynthesis. This Paracoccidioides brasiliensis (strain Pb18) protein is Pentafunctional AROM polypeptide.